A 913-amino-acid polypeptide reads, in one-letter code: Chitin synthase 1 (913 aa).

The disordered stretch occupies residues Met1–Ser27. Positions 237, 241, and 291 each coordinate UDP-N-acetyl-alpha-D-glucosamine. An N-linked (GlcNAc...) asparagine glycan is attached at Asn420. Asp496 is an active-site residue. An N-linked (GlcNAc...) asparagine glycan is attached at Asn510. 6 consecutive transmembrane segments (helical) span residues Trp539–Ser559, Tyr581–Phe601, Ala625–Leu645, Phe658–Phe678, Thr684–Leu704, and Ile711–Ile731. The short motif at Ser741–Gly743 is the Conserved SWG motif element. Transmembrane regions (helical) follow at residues Val800–Ser820 and Met825–Gly845. Residues Asn867 and Asn900 are each glycosylated (N-linked (GlcNAc...) asparagine).

This sequence belongs to the chitin synthase family. Class II subfamily. Homodimer. Requires Mn(2+) as cofactor.

It localises to the cell membrane. The enzyme catalyses [(1-&gt;4)-N-acetyl-beta-D-glucosaminyl](n) + UDP-N-acetyl-alpha-D-glucosamine = [(1-&gt;4)-N-acetyl-beta-D-glucosaminyl](n+1) + UDP + H(+). The activity is inhibited by nikkomycin Z (NikZ). Its function is as follows. Polymerizes chitin, a structural polymer of the cell wall and septum, by transferring the sugar moiety of UDP-GlcNAc to the non-reducing end of the growing chitin polymer. Involved in mycelial growth, sporangial production, zoospore release and pathogenesis. This is Chitin synthase 1 from Phytophthora sojae (strain P6497) (Soybean stem and root rot agent).